Reading from the N-terminus, the 916-residue chain is MNPVESFVFPDIPKTIRDVLFKPDKQMIIVGVIGKSSNPTCNKLIGFNLLTTHPALTDSKCCEGRIKFYFENDGNVLYLHFETTFDQQVMAEQLAKAIDTGVQDNFVNFNSYVRSRFARMLLFAIQVCHMIVLVEPTSVFDTSYLSIFKSLKIIREKYVLKFLPKLLKASNVGNYMGKEARLCSPRFIFLFEGTCDIKPEDVEKLEALECAVEEDIYKMLRTEFIITNNSAMSLFSIPRSKKFVFFSSDSKAKSDPLLDSIDMLMEYLDKPAAGQQGDKDEEEFMNKLRPCAGYGMSAWSVGAGAPKTERERSVLTLIKKHVAEAFEHGFDDSVSKYRGRSHFAVPGFKSWFEGFKFLHKIFIENPDNQNYEPVDVDYKAYLENFHKVIDIDERFFADVCEHGMELAMVNYKEMLPHHYSGTFHEKKYQQARELFLRYARGPEVEKHELKLKDYCDSIWLNGKQQCEYPSLRGNPCALGKHKANDPMDHSSGVVFVSACNCGRTQGHREDPYTIRQANYEFYQLIAKSCSNCTLLERIKFPVFEPSSSDFRAAEFINKNLSNLMSLENSNRTPDTGTHPPMTNDHSPHLSGSQKSQDSASNLTFSIDDKEENETHAKNYASQGDADEALEQENLNEIVIKVGEHADQTDKEKAILRQPSTTEYLPGMLHATSPIGLLPQFPSWSLVCLGPSSIYTHNSGLPEHIQSGFLSGSNFLLPWDVSVRLEHAQSWAASYEKIRNRKKNVSQSKSSDSSNNFTLKIFIGIEYECLRGHRFIMSGPDTVLRGGSGIVRDSGSKVVFNDMPIYFPCLCRNSNVAQLMRVHIVTPKAPVNVILEPKAKIFQNNMQSNFTFTTGQPEPIKLTQSAYWILRLPFVYEGDEGPLMPPSEVNASNAAMHGILLAGMYGIKESEISEELL.

A disordered region spans residues L566–D626. Residues L589–F604 show a composition bias toward polar residues.

This sequence belongs to the SMG8 family.

Functionally, involved in nonsense-mediated decay (NMD) of mRNAs containing premature stop codons. Probable component of kinase complex containing SMG1 and recruited to stalled ribosomes. This chain is Nonsense-mediated mRNA decay factor SMG8, found in Aedes aegypti (Yellowfever mosquito).